The following is a 202-amino-acid chain: Probable septum site-determining protein MinC (202 aa).

Belongs to the MinC family. In terms of assembly, interacts with MinD and FtsZ.

Functionally, cell division inhibitor that blocks the formation of polar Z ring septums. Rapidly oscillates between the poles of the cell to destabilize FtsZ filaments that have formed before they mature into polar Z rings. Prevents FtsZ polymerization. In Sulfurihydrogenibium sp. (strain YO3AOP1), this protein is Probable septum site-determining protein MinC.